Consider the following 336-residue polypeptide: N-acetyl-gamma-glutamyl-phosphate reductase (336 aa).

Residue Cys-144 is part of the active site.

It belongs to the NAGSA dehydrogenase family. Type 1 subfamily.

Its subcellular location is the cytoplasm. The catalysed reaction is N-acetyl-L-glutamate 5-semialdehyde + phosphate + NADP(+) = N-acetyl-L-glutamyl 5-phosphate + NADPH + H(+). Its pathway is amino-acid biosynthesis; L-arginine biosynthesis; N(2)-acetyl-L-ornithine from L-glutamate: step 3/4. Catalyzes the NADPH-dependent reduction of N-acetyl-5-glutamyl phosphate to yield N-acetyl-L-glutamate 5-semialdehyde. This chain is N-acetyl-gamma-glutamyl-phosphate reductase, found in Methanosarcina acetivorans (strain ATCC 35395 / DSM 2834 / JCM 12185 / C2A).